Here is a 156-residue protein sequence, read N- to C-terminus: Ribosomal RNA large subunit methyltransferase H (156 aa).

Residues L73, G104, and 123-128 (LSKLTL) each bind S-adenosyl-L-methionine.

This sequence belongs to the RNA methyltransferase RlmH family. Homodimer.

The protein localises to the cytoplasm. It carries out the reaction pseudouridine(1915) in 23S rRNA + S-adenosyl-L-methionine = N(3)-methylpseudouridine(1915) in 23S rRNA + S-adenosyl-L-homocysteine + H(+). Its function is as follows. Specifically methylates the pseudouridine at position 1915 (m3Psi1915) in 23S rRNA. This chain is Ribosomal RNA large subunit methyltransferase H, found in Hydrogenovibrio crunogenus (strain DSM 25203 / XCL-2) (Thiomicrospira crunogena).